A 350-amino-acid polypeptide reads, in one-letter code: Transmembrane protein 185B (350 aa).

Helical transmembrane passes span 16 to 36 (LIYA…DGVI), 41 to 61 (WAVF…ASVG), 81 to 101 (FKAM…EVLV), 111 to 131 (FWLL…AACV), 168 to 188 (WLVV…VVLY), 211 to 231 (VTMA…EVLL), and 240 to 260 (MFSY…LMAT).

It belongs to the TMEM185 family.

Its subcellular location is the membrane. This Bos taurus (Bovine) protein is Transmembrane protein 185B (TMEM185B).